A 175-amino-acid polypeptide reads, in one-letter code: Nucleoside triphosphate/diphosphate phosphatase (175 aa).

Catalysis depends on arginine 23, which acts as the Proton donor. Positions 87, 103, 105, 107, 120, and 123 each coordinate Mg(2+).

It belongs to the Ntdp family. It depends on Mg(2+) as a cofactor.

It carries out the reaction a ribonucleoside 5'-triphosphate + H2O = a ribonucleoside 5'-diphosphate + phosphate + H(+). The enzyme catalyses a ribonucleoside 5'-diphosphate + H2O = a ribonucleoside 5'-phosphate + phosphate + H(+). Functionally, has nucleoside phosphatase activity towards nucleoside triphosphates and nucleoside diphosphates. In Shouchella clausii (strain KSM-K16) (Alkalihalobacillus clausii), this protein is Nucleoside triphosphate/diphosphate phosphatase.